Consider the following 165-residue polypeptide: uncharacterized protein (165 aa).

The 165-residue stretch at 1 to 165 (MDIKVVKGSI…EAWEKVLGLR (165 aa)) folds into the Macro domain.

This is an uncharacterized protein from Aquifex aeolicus (strain VF5).